We begin with the raw amino-acid sequence, 114 residues long: Early 4 ORF4 protein (114 aa).

The Nuclear localization signal signature appears at 66-75 (RAKRRDRRRR).

This sequence belongs to the adenoviridae E4 ORF4 family. In terms of assembly, interacts with host BAZ1A/ACF1, host PPP2R2A/PP2a-B55alpha subunit, and host PPP2R5E/PP2a-B'B56 subunit. May interact with host SRC. Post-translationally, may be phosphorylated by host SRC kinase.

The protein resides in the host nucleus. It localises to the host cytoplasm. In terms of biological role, plays a role in viral alternative pre-mRNA splicing. Activates dephosphorylation by protein phosphatase 2A of host SR proteins and converts their splicing properties. When expressed alone ex vivo, induces p53/TP53-independent apoptosis called cytoplasmic death. May mimic nutrient/growth signals to activate the host mTOR pathway. In Homo sapiens (Human), this protein is Early 4 ORF4 protein.